The chain runs to 673 residues: G-protein-signaling modulator 1 (673 aa).

The mediates association with membranes stretch occupies residues 1 to 507 (MASPAPPAAE…DLLSKFQSSR (507 aa)). 9 TPR repeats span residues 28-61 (CLEL…GTED), 66-99 (SAIY…ARTI), 106-139 (AKAS…AQEQ), 146-178 (ARAL…PPDV), 180-199 (ETLH…VKEL), 206-239 (GRAY…AKEF), 246-279 (RRAY…SRQI), 286-319 (AQAC…AQEL), and 326-359 (GRAC…SQEI). The segment at 361–485 (DRNGELTARM…VRVQVPRTGI (125 aa)) is interaction with STK11/LKB1. The residue at position 410 (S410) is a Phosphoserine. Omega-N-methylarginine is present on R418. Over residues 420–439 (PLDREQNGETHHTGDWRGPS) the composition is skewed to basic and acidic residues. The disordered stretch occupies residues 420-477 (PLDREQNGETHHTGDWRGPSRDSLPLPMRSRKYQEGPDAIERRPREGSHSPLDSADVR). Residues S442, S467, S469, S490, and S491 each carry the phosphoserine modification. Basic and acidic residues predominate over residues 451–467 (KYQEGPDAIERRPREGS). The 23-residue stretch at 493 to 515 (EECFFDLLSKFQSSRMDDQRCPL) folds into the GoLoco 1 domain. The disordered stretch occupies residues 510 to 544 (DQRCPLEEGQAGAAEATAAPTLEERAAQPSVTASP). Over residues 516–530 (EEGQAGAAEATAAPT) the composition is skewed to low complexity. Residues S543 and S567 each carry the phosphoserine modification. 3 GoLoco domains span residues 546–568 (TEEF…RASV), 594–616 (GDEF…RCPP), and 628–650 (DEDF…RVDL). Disordered stretches follow at residues 609–628 (IDDQ…TMPD) and 645–673 (EQRV…PGAS). S653 bears the Phosphoserine mark.

This sequence belongs to the GPSM family. In terms of assembly, interacts with INSC/inscuteable and FRMPD1. Interacts with GNAI1, GNAI2 and GNAI3 preferentially in their GDP-bound state. May also interact with GNAO1. Interacts with STK11/LKB1 and MACF1. Phosphorylation regulates interaction with G(i/o) alpha. As to expression, isoform 4 is specifically expressed in brain by neurons and also detected in testis, liver, kidney, heart and pancreas (at protein level). Highly expressed in cerebellum and subventricular zone-olfactory bulb system. Isoform 2 and isoform 3 are specifically expressed in heart and are also detected in brain.

It localises to the endoplasmic reticulum membrane. The protein resides in the golgi apparatus membrane. It is found in the cell membrane. Its subcellular location is the cytoplasm. The protein localises to the cytosol. Functionally, guanine nucleotide dissociation inhibitor (GDI) which functions as a receptor-independent activator of heterotrimeric G-protein signaling. Keeps G(i/o) alpha subunit in its GDP-bound form thus uncoupling heterotrimeric G-proteins signaling from G protein-coupled receptors. Controls spindle orientation and asymmetric cell fate of cerebral cortical progenitors. May also be involved in macroautophagy in intestinal cells. May play a role in drug addiction. This is G-protein-signaling modulator 1 (Gpsm1) from Rattus norvegicus (Rat).